The following is a 599-amino-acid chain: Sulfite reductase [NADPH] flavoprotein alpha-component (599 aa).

Residues 64-202 (ITIISASQTG…AASEWRARVV (139 aa)) form the Flavodoxin-like domain. FMN is bound by residues 70-75 (SQTGNA), 117-120 (STQG), and 153-162 (LGDSSYEFFC). In terms of domain architecture, FAD-binding FR-type spans 234 to 448 (DSPLVASLSV…IEHNDNFRLP (215 aa)). Residues threonine 322, alanine 356, 386–389 (RLYS), 404–406 (TVG), tyrosine 410, and 419–422 (GGAS) contribute to the FAD site. Residues 519–520 (SR), 525–529 (KVYVQ), and aspartate 561 contribute to the NADP(+) site. Residue tyrosine 599 coordinates FAD.

It belongs to the NADPH-dependent sulphite reductase flavoprotein subunit CysJ family. This sequence in the N-terminal section; belongs to the flavodoxin family. In the C-terminal section; belongs to the flavoprotein pyridine nucleotide cytochrome reductase family. In terms of assembly, alpha(8)-beta(8). The alpha component is a flavoprotein, the beta component is a hemoprotein. It depends on FAD as a cofactor. The cofactor is FMN.

The enzyme catalyses hydrogen sulfide + 3 NADP(+) + 3 H2O = sulfite + 3 NADPH + 4 H(+). Its pathway is sulfur metabolism; hydrogen sulfide biosynthesis; hydrogen sulfide from sulfite (NADPH route): step 1/1. In terms of biological role, component of the sulfite reductase complex that catalyzes the 6-electron reduction of sulfite to sulfide. This is one of several activities required for the biosynthesis of L-cysteine from sulfate. The flavoprotein component catalyzes the electron flow from NADPH -&gt; FAD -&gt; FMN to the hemoprotein component. The sequence is that of Sulfite reductase [NADPH] flavoprotein alpha-component from Escherichia coli O9:H4 (strain HS).